The following is a 232-amino-acid chain: MSMPQAILTDIEGTTSSLSFVKEVLFPYARRALPDFVREHREHPDVMPWLDQVANETGTAFSEEALVATLQTWIDTDSKHTALKALQGMIWTSGYQNGDFTAHLYPDAVQRLRAWHAANVPLYVYSSGSVPAQQLFFRHSHAGDLSGLFSGWFDTQIGGKRESTSYQRIAQHIGIAPAGIVFLSDVIEELNAAAQIGLNTVLIDRRDDYPTPRHLKDTDRHLHLDSFAQLPF.

This sequence belongs to the HAD-like hydrolase superfamily. MasA/MtnC family. Monomer. The cofactor is Mg(2+).

It carries out the reaction 5-methylsulfanyl-2,3-dioxopentyl phosphate + H2O = 1,2-dihydroxy-5-(methylsulfanyl)pent-1-en-3-one + phosphate. The protein operates within amino-acid biosynthesis; L-methionine biosynthesis via salvage pathway; L-methionine from S-methyl-5-thio-alpha-D-ribose 1-phosphate: step 3/6. It functions in the pathway amino-acid biosynthesis; L-methionine biosynthesis via salvage pathway; L-methionine from S-methyl-5-thio-alpha-D-ribose 1-phosphate: step 4/6. In terms of biological role, bifunctional enzyme that catalyzes the enolization of 2,3-diketo-5-methylthiopentyl-1-phosphate (DK-MTP-1-P) into the intermediate 2-hydroxy-3-keto-5-methylthiopentenyl-1-phosphate (HK-MTPenyl-1-P), which is then dephosphorylated to form the acireductone 1,2-dihydroxy-3-keto-5-methylthiopentene (DHK-MTPene). In Xylella fastidiosa (strain Temecula1 / ATCC 700964), this protein is Enolase-phosphatase E1.